We begin with the raw amino-acid sequence, 428 residues long: Glutamine synthetase leaf isozyme, chloroplastic (428 aa).

Residues 1–49 (MAQILAPSIQCQTRITKTSPLATPISSKMWSSLVMKQNKKVARSAKFRV) constitute a chloroplast transit peptide. A GS beta-grasp domain is found at 75–155 (IIAEYIWIGG…VICDAYTPQG (81 aa)). The 270-residue stretch at 159-428 (PTNKRHKAAE…LAAQKIALKV (270 aa)) folds into the GS catalytic domain.

This sequence belongs to the glutamine synthetase family. As to quaternary structure, homooctamer.

It localises to the plastid. It is found in the chloroplast. The catalysed reaction is L-glutamate + NH4(+) + ATP = L-glutamine + ADP + phosphate + H(+). Functionally, the light-modulated chloroplast enzyme, encoded by a nuclear gene and expressed primarily in leaves, is responsible for the reassimilation of the ammonia generated by photorespiration. The sequence is that of Glutamine synthetase leaf isozyme, chloroplastic (GS2) from Medicago sativa (Alfalfa).